The following is a 481-amino-acid chain: Glutamyl-tRNA(Gln) amidotransferase subunit A (481 aa).

Catalysis depends on charge relay system residues Lys74 and Ser149. Ser173 acts as the Acyl-ester intermediate in catalysis.

Belongs to the amidase family. GatA subfamily. Heterotrimer of A, B and C subunits.

It carries out the reaction L-glutamyl-tRNA(Gln) + L-glutamine + ATP + H2O = L-glutaminyl-tRNA(Gln) + L-glutamate + ADP + phosphate + H(+). Its function is as follows. Allows the formation of correctly charged Gln-tRNA(Gln) through the transamidation of misacylated Glu-tRNA(Gln) in organisms which lack glutaminyl-tRNA synthetase. The reaction takes place in the presence of glutamine and ATP through an activated gamma-phospho-Glu-tRNA(Gln). In Francisella tularensis subsp. mediasiatica (strain FSC147), this protein is Glutamyl-tRNA(Gln) amidotransferase subunit A.